The chain runs to 232 residues: ATP-dependent Clp protease proteolytic subunit 2 (232 aa).

Catalysis depends on Ser124, which acts as the Nucleophile. His149 is a catalytic residue.

This sequence belongs to the peptidase S14 family. Fourteen ClpP subunits assemble into 2 heptameric rings which stack back to back to give a disk-like structure with a central cavity, resembling the structure of eukaryotic proteasomes.

The protein localises to the cytoplasm. It carries out the reaction Hydrolysis of proteins to small peptides in the presence of ATP and magnesium. alpha-casein is the usual test substrate. In the absence of ATP, only oligopeptides shorter than five residues are hydrolyzed (such as succinyl-Leu-Tyr-|-NHMec, and Leu-Tyr-Leu-|-Tyr-Trp, in which cleavage of the -Tyr-|-Leu- and -Tyr-|-Trp bonds also occurs).. Its function is as follows. Cleaves peptides in various proteins in a process that requires ATP hydrolysis. Has a chymotrypsin-like activity. Plays a major role in the degradation of misfolded proteins. The chain is ATP-dependent Clp protease proteolytic subunit 2 from Nostoc sp. (strain PCC 7120 / SAG 25.82 / UTEX 2576).